Here is a 469-residue protein sequence, read N- to C-terminus: Keratin, type I cytoskeletal 16 (469 aa).

Residues 1 to 20 (MATCSRQFTSSSSMKGSCGI) are disordered. Residues 1–112 (MATCSRQFTS…GIGDGLLVGS (112 aa)) are head. The tract at residues 113–148 (EKVTMQNLNDRLATYLDKVRALEEANRDLEVKIRDW) is coil 1A. An IF rod domain is found at 113–424 (EKVTMQNLND…RLLDGENIHS (312 aa)). Residues 149–166 (YQRQRPTEIKDYSPYFKT) are linker 1. The interval 167–258 (IEDLKSKIII…KNHEEEMLAL (92 aa)) is coil 1B. The tract at residues 259–281 (RGQTGGDVNVEMDAAPGVDLSRI) is linker 12. Residues 282 to 420 (LNEMRDQYEQ…ATYRRLLDGE (139 aa)) form a coil 2 region. Residues 421-469 (NIHSSSQHSSGQSYSSREVFSSSSRQPRSILKEQGSTSFSQSQSQSSRD) form a tail region. A disordered region spans residues 422-469 (IHSSSQHSSGQSYSSREVFSSSSRQPRSILKEQGSTSFSQSQSQSSRD). Composition is skewed to low complexity over residues 423–444 (HSSS…SSSS) and 454–469 (QGST…SSRD).

It belongs to the intermediate filament family. Heterodimer of a type I and a type II keratin. KRT16 associates with KRT6 isomers (KRT6A or KRT6B). Interacts with TCHP. Interacts with TRADD. In terms of tissue distribution, expressed in the epithelia of the tongue, upper and lower palate, footpad, proximal nail fold and nail bed, penile spine, sweat gland ducts, and back epidermis (at protein level). Expressed in upper suprabasal layers of the corneal epithelium (at protein level). Expressed in internal stratified epithelia in the esophagus and vagina (at protein level). Expressed in transitional stratified squamous epithelia in the forestomach, anal canal, and nasal cavity (at protein level). Expressed in transitional epithelia of the ureter, bladder and urethra (at protein level). In mature hair follicles, expressed in the companion layer of the outer root sheath during anagen and in the club hair sheath during catagen and telogen (at protein level).

Epidermis-specific type I keratin that plays a key role in skin. Acts as a regulator of innate immunity in response to skin barrier breach: required for some inflammatory checkpoint for the skin barrier maintenance. This is Keratin, type I cytoskeletal 16 (Krt16) from Mus musculus (Mouse).